The sequence spans 233 residues: MADS-box transcription factor 56 (233 aa).

The MADS-box domain occupies 1–61 (MVRGRTELKR…GRLYEFASAP (61 aa)). The K-box domain occupies 87-177 (IQQVKDDTLG…RGKHRNLEAA (91 aa)).

It is found in the nucleus. Its function is as follows. Probable transcription factor. The polypeptide is MADS-box transcription factor 56 (MADS56) (Oryza sativa subsp. indica (Rice)).